Here is an 839-residue protein sequence, read N- to C-terminus: uncharacterized protein (839 aa).

This is an uncharacterized protein from Mycoplasma pneumoniae (strain ATCC 29342 / M129 / Subtype 1) (Mycoplasmoides pneumoniae).